Reading from the N-terminus, the 166-residue chain is Putative membrane protein 164 (166 aa).

Topologically, residues 1–4 are intravirion; sequence MYHP. A helical transmembrane segment spans residues 5–25; that stretch reads VVQVLIGLILVIILILGFYHL. At 26–166 the chain is on the virion surface side; it reads KKKSCKTDTD…TIMGIARNIL (141 aa).

It belongs to the asfivirus envelope protein p22 family.

Its subcellular location is the virion membrane. It localises to the host cell membrane. The sequence is that of Putative membrane protein 164 from Ornithodoros (relapsing fever ticks).